Here is a 190-residue protein sequence, read N- to C-terminus: Selenoprotein S (190 aa).

A helical transmembrane segment spans residues 28–48; that stretch reads SLLASYGWYILFSCVLLYIVI. The VCP/p97-interacting motif (VIM) stretch occupies residues 78 to 90; sequence RQEALAAARLRMQ. Positions 96-190 are disordered; sequence QVEKHKEKQR…RRGPSSGGUS (95 aa). The segment covering 97-118 has biased composition (basic and acidic residues); that stretch reads VEKHKEKQRQLEEEKRRQKIEM. The segment covering 160 to 174 has biased composition (gly residues); that stretch reads RGGGYNPLTGEGGGT. Position 189 (selenocysteine 189) is a non-standard amino acid, selenocysteine.

Belongs to the selenoprotein S family. In terms of assembly, interacts with DERL1 and (via VIM motif) with VCP, suggesting that it forms a membrane complex with DERL1 that serves as a receptor for VCP. Also interacts with DERL2, DERL3 and SELENOK. The SELENOK-SELENOS complex interacts with VCP. Interacts with CCDC47. Post-translationally, truncated SELENOS proteins produced by failed UGA/Sec decoding are ubiquitinated by the CRL2(KLHDC2) and CRL2(KLHDC3) complexes, which recognizes the glycine (Gly) at the C-terminus of truncated SELENOS proteins. Truncated SELENOS proteins produced by failed UGA/Sec decoding are also ubiquitinated by the CRL5(KLHDC1) complex.

The protein localises to the endoplasmic reticulum membrane. The protein resides in the cytoplasm. Its function is as follows. Involved in the degradation process of misfolded endoplasmic reticulum (ER) luminal proteins. Participates in the transfer of misfolded proteins from the ER to the cytosol, where they are destroyed by the proteasome in a ubiquitin-dependent manner. Probably acts by serving as a linker between DERL1, which mediates the retrotranslocation of misfolded proteins into the cytosol, and the ATPase complex VCP, which mediates the translocation and ubiquitination. This Rattus norvegicus (Rat) protein is Selenoprotein S.